Reading from the N-terminus, the 691-residue chain is Elongation factor G (691 aa).

One can recognise a tr-type G domain in the interval 8–283 (EDYRNIGIMA…AVVDFLPSPL (276 aa)). GTP is bound by residues 17–24 (AHIDAGKT), 81–85 (DTPGH), and 135–138 (NKMD).

This sequence belongs to the TRAFAC class translation factor GTPase superfamily. Classic translation factor GTPase family. EF-G/EF-2 subfamily.

It localises to the cytoplasm. Its function is as follows. Catalyzes the GTP-dependent ribosomal translocation step during translation elongation. During this step, the ribosome changes from the pre-translocational (PRE) to the post-translocational (POST) state as the newly formed A-site-bound peptidyl-tRNA and P-site-bound deacylated tRNA move to the P and E sites, respectively. Catalyzes the coordinated movement of the two tRNA molecules, the mRNA and conformational changes in the ribosome. The chain is Elongation factor G from Parvibaculum lavamentivorans (strain DS-1 / DSM 13023 / NCIMB 13966).